Here is a 279-residue protein sequence, read N- to C-terminus: DegV domain-containing protein spr1019 (279 aa).

Positions isoleucine 4 to tyrosine 277 constitute a DegV domain. Threonine 62 and serine 94 together coordinate hexadecanoate.

Its function is as follows. May bind long-chain fatty acids, such as palmitate, and may play a role in lipid transport or fatty acid metabolism. The polypeptide is DegV domain-containing protein spr1019 (Streptococcus pneumoniae (strain ATCC BAA-255 / R6)).